Reading from the N-terminus, the 159-residue chain is Small ribosomal subunit protein uS7c (159 aa).

This sequence belongs to the universal ribosomal protein uS7 family. Part of the 30S ribosomal subunit.

Its subcellular location is the plastid. It localises to the chloroplast. In terms of biological role, one of the primary rRNA binding proteins, it binds directly to 16S rRNA where it nucleates assembly of the head domain of the 30S subunit. In Bigelowiella natans (Pedinomonas minutissima), this protein is Small ribosomal subunit protein uS7c (rps7).